A 148-amino-acid chain; its full sequence is Macrodomain Ter protein (148 aa).

The protein belongs to the MatP family. In terms of assembly, homodimer.

It localises to the cytoplasm. Functionally, required for spatial organization of the terminus region of the chromosome (Ter macrodomain) during the cell cycle. Prevents early segregation of duplicated Ter macrodomains during cell division. Binds specifically to matS, which is a 13 bp signature motif repeated within the Ter macrodomain. In Aliivibrio salmonicida (strain LFI1238) (Vibrio salmonicida (strain LFI1238)), this protein is Macrodomain Ter protein.